The sequence spans 251 residues: Triosephosphate isomerase (251 aa).

Asparagine 9–lysine 11 lines the substrate pocket. Histidine 95 serves as the catalytic Electrophile. The active-site Proton acceptor is glutamate 167. Substrate-binding positions include glycine 173, serine 213, and glycine 234–glycine 235.

This sequence belongs to the triosephosphate isomerase family. In terms of assembly, homodimer.

The protein localises to the cytoplasm. It catalyses the reaction D-glyceraldehyde 3-phosphate = dihydroxyacetone phosphate. Its pathway is carbohydrate biosynthesis; gluconeogenesis. It participates in carbohydrate degradation; glycolysis; D-glyceraldehyde 3-phosphate from glycerone phosphate: step 1/1. Its function is as follows. Involved in the gluconeogenesis. Catalyzes stereospecifically the conversion of dihydroxyacetone phosphate (DHAP) to D-glyceraldehyde-3-phosphate (G3P). The sequence is that of Triosephosphate isomerase from Citrifermentans bemidjiense (strain ATCC BAA-1014 / DSM 16622 / JCM 12645 / Bem) (Geobacter bemidjiensis).